The following is a 133-amino-acid chain: uncharacterized protein (133 aa).

Residues 1–22 form the signal peptide; sequence MYRSSISIQVFICVLFLPLDSG. The N-linked (GlcNAc...) asparagine glycan is linked to asparagine 111.

Its subcellular location is the secreted. This is an uncharacterized protein from Saccharomyces cerevisiae (strain ATCC 204508 / S288c) (Baker's yeast).